We begin with the raw amino-acid sequence, 179 residues long: Putative BPIFA4P protein (179 aa).

Residues 1–20 form the signal peptide; sequence MLNVSGLFVLLCGLLVSSSA.

This sequence belongs to the BPI/LBP/Plunc superfamily. Plunc family. As to expression, expressed in breast cancer and salivary gland.

It is found in the secreted. Its function is as follows. Major protein in sweat, has surfactant properties. This chain is Putative BPIFA4P protein (BPIFA4P), found in Homo sapiens (Human).